The following is a 234-amino-acid chain: Two-component response regulator ARR9 (234 aa).

Residues 10 to 147 form the Response regulatory domain; it reads HVLAVDDSLF…DLNKLKPHMM (138 aa). Residue aspartate 80 is modified to 4-aspartylphosphate.

It belongs to the ARR family. Type-A subfamily. As to quaternary structure, interacts with AHP1 and AHP3. Post-translationally, two-component system major event consists of a His-to-Asp phosphorelay between a sensor histidine kinase (HK) and a response regulator (RR). In plants, the His-to-Asp phosphorelay involves an additional intermediate named Histidine-containing phosphotransfer protein (HPt). This multistep phosphorelay consists of a His-Asp-His-Asp sequential transfer of a phosphate group between first a His and an Asp of the HK protein, followed by the transfer to a conserved His of the HPt protein and finally the transfer to an Asp in the receiver domain of the RR protein. Predominantly expressed in roots.

It is found in the nucleus. Its function is as follows. Functions as a response regulator involved in His-to-Asp phosphorelay signal transduction system. Phosphorylation of the Asp residue in the receiver domain activates the ability of the protein to promote the transcription of target genes. Type-A response regulators seem to act as negative regulators of the cytokinin signaling. The polypeptide is Two-component response regulator ARR9 (ARR9) (Arabidopsis thaliana (Mouse-ear cress)).